A 71-amino-acid chain; its full sequence is UPF0346 protein SMU_1621c (71 aa).

Belongs to the UPF0346 family.

This Streptococcus mutans serotype c (strain ATCC 700610 / UA159) protein is UPF0346 protein SMU_1621c.